The sequence spans 480 residues: Protein nucleotidyltransferase YdiU (480 aa).

ATP contacts are provided by G86, G88, R89, K109, D121, G122, R172, and R179. Residue D248 is the Proton acceptor of the active site. Residues N249 and D258 each contribute to the Mg(2+) site. D258 lines the ATP pocket.

The protein belongs to the SELO family. Requires Mg(2+) as cofactor. Mn(2+) serves as cofactor.

It carries out the reaction L-seryl-[protein] + ATP = 3-O-(5'-adenylyl)-L-seryl-[protein] + diphosphate. The catalysed reaction is L-threonyl-[protein] + ATP = 3-O-(5'-adenylyl)-L-threonyl-[protein] + diphosphate. It catalyses the reaction L-tyrosyl-[protein] + ATP = O-(5'-adenylyl)-L-tyrosyl-[protein] + diphosphate. The enzyme catalyses L-histidyl-[protein] + UTP = N(tele)-(5'-uridylyl)-L-histidyl-[protein] + diphosphate. It carries out the reaction L-seryl-[protein] + UTP = O-(5'-uridylyl)-L-seryl-[protein] + diphosphate. The catalysed reaction is L-tyrosyl-[protein] + UTP = O-(5'-uridylyl)-L-tyrosyl-[protein] + diphosphate. Its function is as follows. Nucleotidyltransferase involved in the post-translational modification of proteins. It can catalyze the addition of adenosine monophosphate (AMP) or uridine monophosphate (UMP) to a protein, resulting in modifications known as AMPylation and UMPylation. The chain is Protein nucleotidyltransferase YdiU from Klebsiella pneumoniae subsp. pneumoniae (strain ATCC 700721 / MGH 78578).